The primary structure comprises 1373 residues: DNA-directed RNA polymerase subunit beta (1373 aa).

The protein belongs to the RNA polymerase beta chain family. As to quaternary structure, the RNAP catalytic core consists of 2 alpha, 1 beta, 1 beta' and 1 omega subunit. When a sigma factor is associated with the core the holoenzyme is formed, which can initiate transcription.

It carries out the reaction RNA(n) + a ribonucleoside 5'-triphosphate = RNA(n+1) + diphosphate. Functionally, DNA-dependent RNA polymerase catalyzes the transcription of DNA into RNA using the four ribonucleoside triphosphates as substrates. The polypeptide is DNA-directed RNA polymerase subunit beta (Rickettsia conorii (strain ATCC VR-613 / Malish 7)).